The following is a 236-amino-acid chain: MHLKSNFKNINIIIALDFFDENKAMKFIYNLNPTIYALKIGNIMFTLFGVRFIKILQKLGFKIFLDLKFYDIPNTIFGAIQAVANLNIWMVSIHISGGIQMLKSARLALKPFKNKPLLMGVTILTSLDKTDMSKLGIQISLSKYILSLAKIAHKCNLDGIICSGTEISNIKKHINVKNFKILTPGIRLNGCSSNDQKNVTTPMLAKQYNVDYIIIGRIVTSSQNPLKTLELIRSQI.

Substrate contacts are provided by residues aspartate 17, lysine 39, 66-75 (DLKFYDIPNT), threonine 125, arginine 187, glutamine 196, glycine 216, and arginine 217. The active-site Proton donor is the lysine 68.

Belongs to the OMP decarboxylase family. Type 1 subfamily. Homodimer.

It carries out the reaction orotidine 5'-phosphate + H(+) = UMP + CO2. The protein operates within pyrimidine metabolism; UMP biosynthesis via de novo pathway; UMP from orotate: step 2/2. Its function is as follows. Catalyzes the decarboxylation of orotidine 5'-monophosphate (OMP) to uridine 5'-monophosphate (UMP). This Buchnera aphidicola subsp. Baizongia pistaciae (strain Bp) protein is Orotidine 5'-phosphate decarboxylase.